Here is a 1573-residue protein sequence, read N- to C-terminus: MSNESNIITVPILGKDTVRVGFGIHQYICTEILENFKSSTYVVITDSNIAPLYLEKIESTFNKSIKDAKAEARLLTYVIPPGESSKCRAMKAEIEDWLLTQSCTRDTILIAMGGGVIGDLVGYVAASFMRGIRFIQMPTTLLAMVDSSIGGKTGIDTPLGKNLVGAFWQPLRVYVDMVFLHTLPPRQVINGLSEIIKTAAMWNENDFQLLENNSAVLLDALNKPSVPGEYKFDSIKPLLQKIILSSIRTKCEVVTLDEHEGGLRNLLNFGHSIGHAYEAILYPQILHGECVAIGMVKEAELARYLGILKPNAVGRLTKCLVSYNLPISVNDPKVKKYASFKHCPVEKLIEYMAVDKKNQGSKKRIVILKAIGETYEKHATVVSDDDIRFILSRDVKVDEFTKSSWDVVVTPPGSKSISNRALVLAAMGNGTCRLTNMLHSDDTQFMMSALESLGAATFSWEDGGETLVVKGNGGKLAVPKEELYLGNAGTAARFLTGIAALVSSKDGAKVVLTGNHRMKVRPIGPLVDALRANGCEINYLEKQGSLPLDLSSKNGLKGGIIELAATVSSQYVSSILMCAPYASQPVTLKLVGGKPISQLYIDMTIAMMASFGVNVTKSTTEENTYNIPCGKYQNPPHYEIESDASSATYPLAIAAITGTKCTVPNIGSASLQGDARFACDVLRPMGCTVEQTATSTTVQGPPKGTLKPLESIDMETMTDAFLTASVVAAVACNVSEGDPVTRITGIANQRVKECNRIAAMVHELAKFGVRTGELEDGIYIFGKNYKELKKPEEGIYTYDDHRIAMSFSVLSLICPSRTLIIDKACVEKTWPYWWDVLHQSFGVKLTGATSVASDPLKGSISKNASIILIGMRGAGKTTIGKIIAKQLNFKFLDLDELLEDYLEMPIAEVIFRMGWDAFRLEEHKVLRKFITEHPEGYVAASGGGVIEMDESRNLLSNFVKEGGIVLHVHRNLEHIKSYLSEDQTRPTYKDQESIDDVYKRRHVWYRECRSHYFISPVLSNQVIDEKIQYSMSRFLDVVTGSSQVLQKFKTKKRSTFLTLNYPRIEDALPTLRDVTVGCDAIEVRVDYLKDPKSSNGISSLDFVAEQISLLRCSTTLPIIFTIRTISQGGLFPNDKEEEAKELMLSAMRYGCDFVDVELGWSSETINILYQHKGYTKLIMSWHDLSGTWSWARPHEWMQKVELASSYADVIKLVGMANNLNDNLELEEFRTRITNSMDIPLILFNMGRFGQLSRILNKFMTPVTHPLLPSKAAPGQLTVKQLNEARVLIGEILPEKFFLFGKPIKHSRSPILHSTAYELLGLPHTYEAFETDTVDEVQKVLNLPDFGGANVTIPYKLSVMKFMDELSDEARFFGAVNTIIPIRIGDKLVLRGDNTDWRGIYDTFANALDGVSLRDTNGLVIGAGGTSRAAIYSLHRLGVSRIYLLNRTLANSYRVQDVFPPDYNIHIIDSDNIPSEELSSVTLSAVVSTIPADIELPEKVASVIKALLANKADGGVFLDMAYKPLHTPLMAVASDLEWKCCNGLEALVRQGLASFHLWTGMTAPFDAVYQKVIE.

Residues 1–384 are 3-dehydroquinate synthase; sequence MSNESNIITV…YEKHATVVSD (384 aa). NAD(+)-binding positions include 46 to 48, 83 to 86, 114 to 116, and aspartate 119; these read DSN, ESSK, and GGV. Residue arginine 130 coordinates 7-phospho-2-dehydro-3-deoxy-D-arabino-heptonate. 139-140 provides a ligand contact to NAD(+); it reads TT. The 7-phospho-2-dehydro-3-deoxy-D-arabino-heptonate site is built by aspartate 146 and lysine 152. Lysine 161 contacts NAD(+). 7-phospho-2-dehydro-3-deoxy-D-arabino-heptonate is bound at residue asparagine 162. Residues 179–182 and asparagine 190 contribute to the NAD(+) site; that span reads FLHT. Glutamate 194 is a binding site for Zn(2+). Residues 194-197 and lysine 250 contribute to the 7-phospho-2-dehydro-3-deoxy-D-arabino-heptonate site; that span reads EIIK. Glutamate 260 serves as the catalytic Proton acceptor; for 3-dehydroquinate synthase activity. 7-phospho-2-dehydro-3-deoxy-D-arabino-heptonate-binding positions include 264–268 and histidine 271; that span reads RNLLN. Histidine 271 provides a ligand contact to Zn(2+). Histidine 275 acts as the Proton acceptor; for 3-dehydroquinate synthase activity in catalysis. Positions 287 and 356 each coordinate 7-phospho-2-dehydro-3-deoxy-D-arabino-heptonate. Histidine 287 is a Zn(2+) binding site. The EPSP synthase stretch occupies residues 397-843; the sequence is VDEFTKSSWD…WDVLHQSFGV (447 aa). Cysteine 825 functions as the For EPSP synthase activity in the catalytic mechanism. The tract at residues 863–1058 is shikimate kinase; sequence NASIILIGMR…KTKKRSTFLT (196 aa). ATP is bound at residue 870–877; that stretch reads GMRGAGKT. The interval 1059-1280 is 3-dehydroquinase; sequence LNYPRIEDAL…AAPGQLTVKQ (222 aa). The active-site Proton acceptor; for 3-dehydroquinate dehydratase activity is the histidine 1182. Lysine 1211 functions as the Schiff-base intermediate with substrate; for 3-dehydroquinate dehydratase activity in the catalytic mechanism. Residues 1293-1573 are shikimate dehydrogenase; the sequence is PEKFFLFGKP…FDAVYQKVIE (281 aa).

In the N-terminal section; belongs to the sugar phosphate cyclases superfamily. Dehydroquinate synthase family. The protein in the 2nd section; belongs to the EPSP synthase family. It in the 3rd section; belongs to the shikimate kinase family. This sequence in the 4th section; belongs to the type-I 3-dehydroquinase family. In the C-terminal section; belongs to the shikimate dehydrogenase family. In terms of assembly, homodimer. Requires Zn(2+) as cofactor.

Its subcellular location is the cytoplasm. The catalysed reaction is 7-phospho-2-dehydro-3-deoxy-D-arabino-heptonate = 3-dehydroquinate + phosphate. The enzyme catalyses 3-dehydroquinate = 3-dehydroshikimate + H2O. It carries out the reaction shikimate + NADP(+) = 3-dehydroshikimate + NADPH + H(+). It catalyses the reaction shikimate + ATP = 3-phosphoshikimate + ADP + H(+). The catalysed reaction is 3-phosphoshikimate + phosphoenolpyruvate = 5-O-(1-carboxyvinyl)-3-phosphoshikimate + phosphate. The protein operates within metabolic intermediate biosynthesis; chorismate biosynthesis; chorismate from D-erythrose 4-phosphate and phosphoenolpyruvate: step 2/7. It participates in metabolic intermediate biosynthesis; chorismate biosynthesis; chorismate from D-erythrose 4-phosphate and phosphoenolpyruvate: step 3/7. Its pathway is metabolic intermediate biosynthesis; chorismate biosynthesis; chorismate from D-erythrose 4-phosphate and phosphoenolpyruvate: step 4/7. It functions in the pathway metabolic intermediate biosynthesis; chorismate biosynthesis; chorismate from D-erythrose 4-phosphate and phosphoenolpyruvate: step 5/7. The protein operates within metabolic intermediate biosynthesis; chorismate biosynthesis; chorismate from D-erythrose 4-phosphate and phosphoenolpyruvate: step 6/7. The AROM polypeptide catalyzes 5 consecutive enzymatic reactions in prechorismate polyaromatic amino acid biosynthesis. In Schizosaccharomyces pombe (strain 972 / ATCC 24843) (Fission yeast), this protein is Pentafunctional AROM polypeptide.